The chain runs to 99 residues: MSAVTLQQGDLLLNLYIQPKASRDQIVGLHGDELKVAITAPPIDGKANAHLSKYLAKTFKVPKSDIHIMKGELGRHKQIRVIDPKIIPSIITELMGQTS.

The protein belongs to the UPF0235 family.

This is UPF0235 protein Sbal_3028 from Shewanella baltica (strain OS155 / ATCC BAA-1091).